The primary structure comprises 150 residues: Large ribosomal subunit protein bL9 (150 aa).

Belongs to the bacterial ribosomal protein bL9 family.

Binds to the 23S rRNA. This is Large ribosomal subunit protein bL9 from Shewanella woodyi (strain ATCC 51908 / MS32).